A 419-amino-acid chain; its full sequence is UDP-N-acetylglucosamine 1-carboxyvinyltransferase (419 aa).

Residue 22–23 coordinates phosphoenolpyruvate; sequence KN. Position 92 (arginine 92) interacts with UDP-N-acetyl-alpha-D-glucosamine. The active-site Proton donor is cysteine 116. Cysteine 116 is modified (2-(S-cysteinyl)pyruvic acid O-phosphothioketal). UDP-N-acetyl-alpha-D-glucosamine-binding positions include 121-125, aspartate 305, and isoleucine 327; that span reads RPIDQ.

The protein belongs to the EPSP synthase family. MurA subfamily.

It localises to the cytoplasm. The catalysed reaction is phosphoenolpyruvate + UDP-N-acetyl-alpha-D-glucosamine = UDP-N-acetyl-3-O-(1-carboxyvinyl)-alpha-D-glucosamine + phosphate. The protein operates within cell wall biogenesis; peptidoglycan biosynthesis. In terms of biological role, cell wall formation. Adds enolpyruvyl to UDP-N-acetylglucosamine. This chain is UDP-N-acetylglucosamine 1-carboxyvinyltransferase, found in Trichlorobacter lovleyi (strain ATCC BAA-1151 / DSM 17278 / SZ) (Geobacter lovleyi).